The chain runs to 560 residues: DNA ligase B (560 aa).

The N6-AMP-lysine intermediate role is filled by lysine 124.

The protein belongs to the NAD-dependent DNA ligase family. LigB subfamily.

It catalyses the reaction NAD(+) + (deoxyribonucleotide)n-3'-hydroxyl + 5'-phospho-(deoxyribonucleotide)m = (deoxyribonucleotide)n+m + AMP + beta-nicotinamide D-nucleotide.. Its function is as follows. Catalyzes the formation of phosphodiester linkages between 5'-phosphoryl and 3'-hydroxyl groups in double-stranded DNA using NAD as a coenzyme and as the energy source for the reaction. The polypeptide is DNA ligase B (Escherichia coli O6:H1 (strain CFT073 / ATCC 700928 / UPEC)).